Here is a 167-residue protein sequence, read N- to C-terminus: Cytochrome c-type biogenesis protein CcmE (167 aa).

Topologically, residues 1 to 7 (MTRKTRR) are cytoplasmic. The helical; Signal-anchor for type II membrane protein transmembrane segment at 8-28 (LWIVIACLACVGSAAALTLRA) threads the bilayer. Over 29-167 (FSSNIVFFMA…DTMTAKKAGG (139 aa)) the chain is Periplasmic. Heme-binding residues include His125 and Tyr129. The span at 141 to 150 (TGKWDPRFGK) shows a compositional bias: basic and acidic residues. The segment at 141-167 (TGKWDPRFGKAPDASSWDTMTAKKAGG) is disordered.

This sequence belongs to the CcmE/CycJ family.

It is found in the cell inner membrane. Functionally, heme chaperone required for the biogenesis of c-type cytochromes. Transiently binds heme delivered by CcmC and transfers the heme to apo-cytochromes in a process facilitated by CcmF and CcmH. The chain is Cytochrome c-type biogenesis protein CcmE from Gluconobacter oxydans (strain 621H) (Gluconobacter suboxydans).